We begin with the raw amino-acid sequence, 432 residues long: 3-phosphoshikimate 1-carboxyvinyltransferase (432 aa).

The 3-phosphoshikimate site is built by Lys23, Ser24, and Arg28. Lys23 provides a ligand contact to phosphoenolpyruvate. Residues Gly96 and Arg125 each coordinate phosphoenolpyruvate. Positions 170, 172, 318, and 345 each coordinate 3-phosphoshikimate. Residue Gln172 participates in phosphoenolpyruvate binding. Asp318 serves as the catalytic Proton acceptor. Positions 349 and 391 each coordinate phosphoenolpyruvate.

The protein belongs to the EPSP synthase family. As to quaternary structure, monomer.

It localises to the cytoplasm. The enzyme catalyses 3-phosphoshikimate + phosphoenolpyruvate = 5-O-(1-carboxyvinyl)-3-phosphoshikimate + phosphate. It functions in the pathway metabolic intermediate biosynthesis; chorismate biosynthesis; chorismate from D-erythrose 4-phosphate and phosphoenolpyruvate: step 6/7. Functionally, catalyzes the transfer of the enolpyruvyl moiety of phosphoenolpyruvate (PEP) to the 5-hydroxyl of shikimate-3-phosphate (S3P) to produce enolpyruvyl shikimate-3-phosphate and inorganic phosphate. This is 3-phosphoshikimate 1-carboxyvinyltransferase from Gloeobacter violaceus (strain ATCC 29082 / PCC 7421).